Consider the following 443-residue polypeptide: Proline--tRNA ligase (443 aa).

This sequence belongs to the class-II aminoacyl-tRNA synthetase family. ProS type 2 subfamily. As to quaternary structure, homodimer.

It localises to the cytoplasm. The catalysed reaction is tRNA(Pro) + L-proline + ATP = L-prolyl-tRNA(Pro) + AMP + diphosphate. Functionally, catalyzes the attachment of proline to tRNA(Pro) in a two-step reaction: proline is first activated by ATP to form Pro-AMP and then transferred to the acceptor end of tRNA(Pro). The polypeptide is Proline--tRNA ligase (Methylobacterium nodulans (strain LMG 21967 / CNCM I-2342 / ORS 2060)).